A 250-amino-acid chain; its full sequence is 5-oxoprolinase subunit A (250 aa).

This sequence belongs to the LamB/PxpA family. In terms of assembly, forms a complex composed of PxpA, PxpB and PxpC.

The catalysed reaction is 5-oxo-L-proline + ATP + 2 H2O = L-glutamate + ADP + phosphate + H(+). Catalyzes the cleavage of 5-oxoproline to form L-glutamate coupled to the hydrolysis of ATP to ADP and inorganic phosphate. The polypeptide is 5-oxoprolinase subunit A (Staphylococcus aureus (strain NCTC 8325 / PS 47)).